Consider the following 543-residue polypeptide: CTP synthase (543 aa).

The tract at residues 1-265 (MTRYIFVTGG…DDFVVERFGL (265 aa)) is amidoligase domain. S13 serves as a coordination point for CTP. S13 serves as a coordination point for UTP. ATP-binding positions include 14 to 19 (SLGKGI) and D71. D71 and E139 together coordinate Mg(2+). Residues 146-148 (DIE), 186-191 (KTKPTQ), and K222 contribute to the CTP site. Residues 186 to 191 (KTKPTQ) and K222 each bind UTP. The Glutamine amidotransferase type-1 domain occupies 290–541 (TIAMVGKYME…VNAALAQKAK (252 aa)). G351 is an L-glutamine binding site. C378 acts as the Nucleophile; for glutamine hydrolysis in catalysis. L-glutamine contacts are provided by residues 379-382 (LGMQ), E402, and R469. Active-site residues include H514 and E516.

The protein belongs to the CTP synthase family. In terms of assembly, homotetramer.

It carries out the reaction UTP + L-glutamine + ATP + H2O = CTP + L-glutamate + ADP + phosphate + 2 H(+). The enzyme catalyses L-glutamine + H2O = L-glutamate + NH4(+). It catalyses the reaction UTP + NH4(+) + ATP = CTP + ADP + phosphate + 2 H(+). Its pathway is pyrimidine metabolism; CTP biosynthesis via de novo pathway; CTP from UDP: step 2/2. With respect to regulation, allosterically activated by GTP, when glutamine is the substrate; GTP has no effect on the reaction when ammonia is the substrate. The allosteric effector GTP functions by stabilizing the protein conformation that binds the tetrahedral intermediate(s) formed during glutamine hydrolysis. Inhibited by the product CTP, via allosteric rather than competitive inhibition. In terms of biological role, catalyzes the ATP-dependent amination of UTP to CTP with either L-glutamine or ammonia as the source of nitrogen. Regulates intracellular CTP levels through interactions with the four ribonucleotide triphosphates. The sequence is that of CTP synthase from Ectopseudomonas mendocina (strain ymp) (Pseudomonas mendocina).